The following is a 184-amino-acid chain: ATP synthase subunit b, chloroplastic (184 aa).

The chain crosses the membrane as a helical span at residues 27–49 (LATNLINLSVVLGVLVFFGKGVL).

Belongs to the ATPase B chain family. As to quaternary structure, F-type ATPases have 2 components, F(1) - the catalytic core - and F(0) - the membrane proton channel. F(1) has five subunits: alpha(3), beta(3), gamma(1), delta(1), epsilon(1). F(0) has four main subunits: a(1), b(1), b'(1) and c(10-14). The alpha and beta chains form an alternating ring which encloses part of the gamma chain. F(1) is attached to F(0) by a central stalk formed by the gamma and epsilon chains, while a peripheral stalk is formed by the delta, b and b' chains.

The protein resides in the plastid. It localises to the chloroplast thylakoid membrane. F(1)F(0) ATP synthase produces ATP from ADP in the presence of a proton or sodium gradient. F-type ATPases consist of two structural domains, F(1) containing the extramembraneous catalytic core and F(0) containing the membrane proton channel, linked together by a central stalk and a peripheral stalk. During catalysis, ATP synthesis in the catalytic domain of F(1) is coupled via a rotary mechanism of the central stalk subunits to proton translocation. Functionally, component of the F(0) channel, it forms part of the peripheral stalk, linking F(1) to F(0). The chain is ATP synthase subunit b, chloroplastic from Cicer arietinum (Chickpea).